The chain runs to 443 residues: Threonine/serine transporter TdcC (443 aa).

The next 11 helical transmembrane spans lie at 22–42, 44–64, 97–117, 140–160, 163–183, 207–227, 261–281, 311–331, 366–386, 389–409, and 423–443; these read TTWT…FFPI, AGFG…PIAF, GVVI…IYGV, FVAL…KDLM, VMSY…LSLI, ILIT…FSPI, MLMV…LSPA, FAIT…FKSF, ISMI…PNIL, IEAM…MYAI, and DNVF…YKLF.

This sequence belongs to the amino acid/polyamine transporter 2 family. SdaC/TdcC subfamily.

Its subcellular location is the cell inner membrane. It carries out the reaction L-threonine(in) + H(+)(in) = L-threonine(out) + H(+)(out). It catalyses the reaction L-serine(in) + H(+)(in) = L-serine(out) + H(+)(out). Functionally, involved in the import of threonine and serine into the cell, with the concomitant import of a proton (symport system). In Shigella sonnei (strain Ss046), this protein is Threonine/serine transporter TdcC.